A 388-amino-acid polypeptide reads, in one-letter code: Succinate--CoA ligase [ADP-forming] subunit beta (388 aa).

The 236-residue stretch at 9 to 244 (KALFAEYGLP…PSQDDAREAH (236 aa)) folds into the ATP-grasp domain. ATP is bound by residues lysine 46, 53 to 55 (GRG), glutamate 99, threonine 102, and glutamate 107. The Mg(2+) site is built by asparagine 199 and aspartate 213. Substrate-binding positions include asparagine 264 and 321 to 323 (GIV).

Belongs to the succinate/malate CoA ligase beta subunit family. As to quaternary structure, heterotetramer of two alpha and two beta subunits. It depends on Mg(2+) as a cofactor.

It carries out the reaction succinate + ATP + CoA = succinyl-CoA + ADP + phosphate. It catalyses the reaction GTP + succinate + CoA = succinyl-CoA + GDP + phosphate. The protein operates within carbohydrate metabolism; tricarboxylic acid cycle; succinate from succinyl-CoA (ligase route): step 1/1. Its function is as follows. Succinyl-CoA synthetase functions in the citric acid cycle (TCA), coupling the hydrolysis of succinyl-CoA to the synthesis of either ATP or GTP and thus represents the only step of substrate-level phosphorylation in the TCA. The beta subunit provides nucleotide specificity of the enzyme and binds the substrate succinate, while the binding sites for coenzyme A and phosphate are found in the alpha subunit. The protein is Succinate--CoA ligase [ADP-forming] subunit beta of Shewanella amazonensis (strain ATCC BAA-1098 / SB2B).